An 82-amino-acid polypeptide reads, in one-letter code: Small ribosomal subunit protein eS27A (82 aa).

The C4-type zinc finger occupies 37 to 59; that stretch reads CPGCLNITTVFSHAQTAVTCESC. Position 40 is an S-methylcysteine (C40).

Belongs to the eukaryotic ribosomal protein eS27 family. In terms of assembly, component of the small ribosomal subunit (SSU). Mature yeast ribosomes consist of a small (40S) and a large (60S) subunit. The 40S small subunit contains 1 molecule of ribosomal RNA (18S rRNA) and 33 different proteins (encoded by 57 genes). The large 60S subunit contains 3 rRNA molecules (25S, 5.8S and 5S rRNA) and 46 different proteins (encoded by 81 genes). Zn(2+) serves as cofactor. In terms of processing, the N-terminus is not modified.

Its subcellular location is the cytoplasm. Its function is as follows. Component of the ribosome, a large ribonucleoprotein complex responsible for the synthesis of proteins in the cell. The small ribosomal subunit (SSU) binds messenger RNAs (mRNAs) and translates the encoded message by selecting cognate aminoacyl-transfer RNA (tRNA) molecules. The large subunit (LSU) contains the ribosomal catalytic site termed the peptidyl transferase center (PTC), which catalyzes the formation of peptide bonds, thereby polymerizing the amino acids delivered by tRNAs into a polypeptide chain. The nascent polypeptides leave the ribosome through a tunnel in the LSU and interact with protein factors that function in enzymatic processing, targeting, and the membrane insertion of nascent chains at the exit of the ribosomal tunnel. The sequence is that of Small ribosomal subunit protein eS27A from Saccharomyces cerevisiae (strain ATCC 204508 / S288c) (Baker's yeast).